The sequence spans 140 residues: Nucleoside diphosphate kinase (140 aa).

Residues K11, F59, R87, T93, R104, and N114 each contribute to the ATP site. Residue H117 is the Pros-phosphohistidine intermediate of the active site.

This sequence belongs to the NDK family. Homotetramer. Mg(2+) serves as cofactor.

The protein resides in the cytoplasm. It catalyses the reaction a 2'-deoxyribonucleoside 5'-diphosphate + ATP = a 2'-deoxyribonucleoside 5'-triphosphate + ADP. The catalysed reaction is a ribonucleoside 5'-diphosphate + ATP = a ribonucleoside 5'-triphosphate + ADP. Functionally, major role in the synthesis of nucleoside triphosphates other than ATP. The ATP gamma phosphate is transferred to the NDP beta phosphate via a ping-pong mechanism, using a phosphorylated active-site intermediate. The protein is Nucleoside diphosphate kinase of Mesorhizobium japonicum (strain LMG 29417 / CECT 9101 / MAFF 303099) (Mesorhizobium loti (strain MAFF 303099)).